Here is a 92-residue protein sequence, read N- to C-terminus: Small ribosomal subunit protein uS19 (92 aa).

The protein belongs to the universal ribosomal protein uS19 family.

Protein S19 forms a complex with S13 that binds strongly to the 16S ribosomal RNA. The polypeptide is Small ribosomal subunit protein uS19 (Trichormus variabilis (strain ATCC 29413 / PCC 7937) (Anabaena variabilis)).